The chain runs to 312 residues: HPr kinase/phosphorylase (312 aa).

Active-site residues include His139 and Lys160. 154 to 161 is an ATP binding site; it reads GSSGVGKS. Mg(2+) is bound at residue Ser161. Asp178 acts as the Proton acceptor; for phosphorylation activity. Proton donor; for dephosphorylation activity in catalysis. Residues 202–211 form an important for the catalytic mechanism of both phosphorylation and dephosphorylation region; it reads LEIRGLGIIN. Glu203 lines the Mg(2+) pocket. The active site involves Arg244. The important for the catalytic mechanism of dephosphorylation stretch occupies residues 265–270; it reads PVRPGR.

It belongs to the HPrK/P family. Homohexamer. The cofactor is Mg(2+).

It carries out the reaction [HPr protein]-L-serine + ATP = [HPr protein]-O-phospho-L-serine + ADP + H(+). The catalysed reaction is [HPr protein]-O-phospho-L-serine + phosphate + H(+) = [HPr protein]-L-serine + diphosphate. Catalyzes the ATP- as well as the pyrophosphate-dependent phosphorylation of a specific serine residue in HPr, a phosphocarrier protein of the phosphoenolpyruvate-dependent sugar phosphotransferase system (PTS). HprK/P also catalyzes the pyrophosphate-producing, inorganic phosphate-dependent dephosphorylation (phosphorolysis) of seryl-phosphorylated HPr (P-Ser-HPr). The two antagonistic activities of HprK/P are regulated by several intracellular metabolites, which change their concentration in response to the absence or presence of rapidly metabolisable carbon sources (glucose, fructose, etc.) in the growth medium. Therefore, by controlling the phosphorylation state of HPr, HPrK/P is a sensor enzyme that plays a major role in the regulation of carbon metabolism and sugar transport: it mediates carbon catabolite repression (CCR), and regulates PTS-catalyzed carbohydrate uptake and inducer exclusion. The chain is HPr kinase/phosphorylase from Listeria welshimeri serovar 6b (strain ATCC 35897 / DSM 20650 / CCUG 15529 / CIP 8149 / NCTC 11857 / SLCC 5334 / V8).